Consider the following 248-residue polypeptide: 14-3-3 protein gamma-2 (248 aa).

The protein belongs to the 14-3-3 family. Homodimer, and heterodimer with other family members. As to expression, expressed in brain, gill, heart, intestine, kidney, liver, ovary, skeletal muscle, spleen and testis.

The protein resides in the cytoplasm. Adapter protein implicated in the regulation of a large spectrum of both general and specialized signaling pathways. Binds to a large number of partners, usually by recognition of a phosphoserine or phosphothreonine motif. Binding generally results in the modulation of the activity of the binding partner. The protein is 14-3-3 protein gamma-2 of Oncorhynchus mykiss (Rainbow trout).